The sequence spans 123 residues: Small ribosomal subunit protein uS12 (123 aa).

The interval 1–22 (MATINQLVRKPRKRKAKTSDVR) is disordered. The residue at position 89 (D89) is a 3-methylthioaspartic acid. Positions 101–123 (ALDTSGVNDRKRGRSKYGTKRPK) are disordered. A compositionally biased stretch (basic residues) spans 111-123 (KRGRSKYGTKRPK).

The protein belongs to the universal ribosomal protein uS12 family. Part of the 30S ribosomal subunit. Contacts proteins S8 and S17. May interact with IF1 in the 30S initiation complex.

Its function is as follows. With S4 and S5 plays an important role in translational accuracy. Interacts with and stabilizes bases of the 16S rRNA that are involved in tRNA selection in the A site and with the mRNA backbone. Located at the interface of the 30S and 50S subunits, it traverses the body of the 30S subunit contacting proteins on the other side and probably holding the rRNA structure together. The combined cluster of proteins S8, S12 and S17 appears to hold together the shoulder and platform of the 30S subunit. In Teredinibacter turnerae (strain ATCC 39867 / T7901), this protein is Small ribosomal subunit protein uS12.